The primary structure comprises 131 residues: Small ribosomal subunit protein eS17 (131 aa).

The protein belongs to the eukaryotic ribosomal protein eS17 family.

This chain is Small ribosomal subunit protein eS17 (RpS17), found in Drosophila melanogaster (Fruit fly).